The chain runs to 352 residues: Biotin synthase (352 aa).

A Radical SAM core domain is found at 44–262 (NRVQVSTLLS…LAVARILMPK (219 aa)). C59, C63, and C66 together coordinate [4Fe-4S] cluster. Residues C103, C134, C194, and R266 each contribute to the [2Fe-2S] cluster site.

Belongs to the radical SAM superfamily. Biotin synthase family. In terms of assembly, homodimer. It depends on [4Fe-4S] cluster as a cofactor. The cofactor is [2Fe-2S] cluster.

It catalyses the reaction (4R,5S)-dethiobiotin + (sulfur carrier)-SH + 2 reduced [2Fe-2S]-[ferredoxin] + 2 S-adenosyl-L-methionine = (sulfur carrier)-H + biotin + 2 5'-deoxyadenosine + 2 L-methionine + 2 oxidized [2Fe-2S]-[ferredoxin]. Its pathway is cofactor biosynthesis; biotin biosynthesis; biotin from 7,8-diaminononanoate: step 2/2. Functionally, catalyzes the conversion of dethiobiotin (DTB) to biotin by the insertion of a sulfur atom into dethiobiotin via a radical-based mechanism. This Pseudomonas putida (strain ATCC 47054 / DSM 6125 / CFBP 8728 / NCIMB 11950 / KT2440) protein is Biotin synthase.